The primary structure comprises 408 residues: LL-diaminopimelate aminotransferase (408 aa).

Residues Y15 and G42 each coordinate substrate. Residues Y72, S108 to K109, Y132, N187, Y218, and S246 to S248 each bind pyridoxal 5'-phosphate. Residues K109, Y132, and N187 each coordinate substrate. K249 carries the post-translational modification N6-(pyridoxal phosphate)lysine. R257 and N292 together coordinate pyridoxal 5'-phosphate. 2 residues coordinate substrate: N292 and R388.

The protein belongs to the class-I pyridoxal-phosphate-dependent aminotransferase family. LL-diaminopimelate aminotransferase subfamily. As to quaternary structure, homodimer. Requires pyridoxal 5'-phosphate as cofactor.

The enzyme catalyses (2S,6S)-2,6-diaminopimelate + 2-oxoglutarate = (S)-2,3,4,5-tetrahydrodipicolinate + L-glutamate + H2O + H(+). It participates in amino-acid biosynthesis; L-lysine biosynthesis via DAP pathway; LL-2,6-diaminopimelate from (S)-tetrahydrodipicolinate (aminotransferase route): step 1/1. Involved in the synthesis of meso-diaminopimelate (m-DAP or DL-DAP), required for both lysine and peptidoglycan biosynthesis. Catalyzes the direct conversion of tetrahydrodipicolinate to LL-diaminopimelate. This is LL-diaminopimelate aminotransferase from Prochlorococcus marinus (strain MIT 9515).